A 761-amino-acid polypeptide reads, in one-letter code: 5-methyltetrahydropteroyltriglutamate--homocysteine methyltransferase (761 aa).

Residues 16-19 (RELK) and K118 each bind 5-methyltetrahydropteroyltri-L-glutamate. L-homocysteine is bound by residues 436–438 (IGS) and E489. Residues 436-438 (IGS) and E489 contribute to the L-methionine site. 5-methyltetrahydropteroyltri-L-glutamate-binding positions include 520 to 521 (RC) and W566. D604 is an L-homocysteine binding site. Position 604 (D604) interacts with L-methionine. A 5-methyltetrahydropteroyltri-L-glutamate-binding site is contributed by E610. Residues H646, C648, and E670 each contribute to the Zn(2+) site. H699 serves as the catalytic Proton donor. Residue C731 coordinates Zn(2+).

This sequence belongs to the vitamin-B12 independent methionine synthase family. The cofactor is Zn(2+).

It catalyses the reaction 5-methyltetrahydropteroyltri-L-glutamate + L-homocysteine = tetrahydropteroyltri-L-glutamate + L-methionine. The protein operates within amino-acid biosynthesis; L-methionine biosynthesis via de novo pathway; L-methionine from L-homocysteine (MetE route): step 1/1. Its function is as follows. Catalyzes the transfer of a methyl group from 5-methyltetrahydrofolate to homocysteine resulting in methionine formation. The sequence is that of 5-methyltetrahydropteroyltriglutamate--homocysteine methyltransferase from Vibrio cholerae serotype O1 (strain ATCC 39315 / El Tor Inaba N16961).